Here is a 670-residue protein sequence, read N- to C-terminus: NADH-ubiquinone oxidoreductase chain 5 (670 aa).

A run of 19 helical transmembrane segments spans residues 1–21 (MYIV…IFGH), 31–51 (IAVG…YEIL), 81–101 (LTSI…LYSM), 111–131 (TRFF…VTAD), 133–153 (FVQL…LINF), 178–198 (LFFG…SVIF), 211–231 (LLGY…IGVV), 251–271 (TPVS…FLVL), 283–303 (ILNI…TIGI), 311–331 (VIAY…GLLN), 339–359 (LTTH…VIHG), 375–395 (LMPL…GFPF), 421–441 (AIIG…LLIL), 462–482 (TNMV…GYVT), 519–539 (LLPL…YFNI), 566–586 (FDFL…YDVM), 594–614 (LWEK…FTAL), 629–649 (IVQT…TGFI), and 650–670 (YMEL…IKID).

This sequence belongs to the complex I subunit 5 family.

The protein resides in the mitochondrion inner membrane. It catalyses the reaction a ubiquinone + NADH + 5 H(+)(in) = a ubiquinol + NAD(+) + 4 H(+)(out). Functionally, core subunit of the mitochondrial membrane respiratory chain NADH dehydrogenase (Complex I) that is believed to belong to the minimal assembly required for catalysis. Complex I functions in the transfer of electrons from NADH to the respiratory chain. The immediate electron acceptor for the enzyme is believed to be ubiquinone. This is NADH-ubiquinone oxidoreductase chain 5 (nad5) from Dictyostelium discoideum (Social amoeba).